We begin with the raw amino-acid sequence, 304 residues long: MGNHAGKRELNAEKASTNSETNRGESEKKRNLGELSRTTSEDNEVFGEADANQNNGTSSQDTAVTDSKRTADPKNAWQDAHPADPGSRPHLIRLFSRDAPGREDNTFKDRPSESDELQTIQEDSAATSESLDVMASQKRPSQRHGSKYLATASTMDHARHGFLPRHRDTGILDSIGRFFGGDRGAPKRGSGKDSHHPARTAHYGSLPQKSHGRTQDENPVVHFFKNIVTPRTPPPSQGKGRGLSLSRFSWGAEGQRPGFGYGGRASDYKSAHKGFKGVDAQGTLSKIFKLGGRDSRSGSPMARR.

Composition is skewed to basic and acidic residues over residues M1 to A12 and N22 to L32. Residues M1–S146 form a disordered region. Residue G2 is modified to N-acetylalanine. Polar residues predominate over residues A51–T65. Over residues F95–E113 the composition is skewed to basic and acidic residues. S96 is modified (phosphoserine). A compositionally biased stretch (polar residues) spans L117–S130. A phosphoserine mark is found at S141 and S146. The residue at position 148 (Y148) is a Phosphotyrosine. At T151 the chain carries Phosphothreonine. S153 is modified (phosphoserine). T154 carries the post-translational modification Phosphothreonine. A citrulline; in form C8 mark is found at R159 and R165. R167 is modified (citrulline). T169 bears the Phosphothreonine mark. The residue at position 174 (S174) is a Phosphoserine. Omega-N-methylarginine occurs at positions 177 and 183. Residues F179 to H222 are induces experimental autoimmune encephalomyelitis (EAE) 1. A disordered region spans residues G180–S249. A Phosphoserine modification is found at S190. Citrulline is present on R199. Residue Y203 is modified to Phosphotyrosine. Phosphoserine is present on S210. T214 and T229 each carry phosphothreonine. R231 carries the citrulline modification. Phosphothreonine is present on T232. Deamidated glutamine is present on Q237. R241 bears the Omega-N-methylarginine; alternate mark. Residue R241 is modified to Symmetric dimethylarginine; alternate. The segment at S246–R256 is induces experimental autoimmune encephalomyelitis (EAE) 2. S249 bears the Phosphoserine mark. Residues R256 and R264 each carry the citrulline; in form C8 modification. Deamidated glutamine is present on Q281. The residue at position 293 (R293) is a Citrulline; in form C8. S295 carries the phosphoserine modification. Position 296 is a citrulline (R296). S299 carries the phosphoserine; by UHMK1 modification. R303 carries the post-translational modification Citrulline. The residue at position 304 (R304) is a Citrulline; in form C8.

It belongs to the myelin basic protein family. As to quaternary structure, homodimer. Isoform 3 exists as a homodimer. Post-translationally, several charge isomers of MBP; C1 (the most cationic, least modified, and most abundant form), C2, C3, C4, C5, C6, C7, C8-A and C8-B (the least cationic form); are produced as a result of optional PTM, such as phosphorylation, deamidation of glutamine or asparagine, arginine citrullination and methylation. C8-A and C8-B contain each two mass isoforms termed C8-A(H), C8-A(L), C8-B(H) and C8-B(L), (H) standing for higher and (L) for lower molecular weight. C3, C4 and C5 are phosphorylated. The ratio of methylated arginine residues decreases during aging, making the protein more cationic. The N-terminal alanine is acetylated (isoform 3, isoform 4, isoform 5 and isoform 6). In terms of processing, arg-241 was found to be 6% monomethylated and 60% symmetrically dimethylated. Post-translationally, proteolytically cleaved in B cell lysosomes by cathepsin CTSG which degrades the major immunogenic MBP epitope and prevents the activation of MBP-specific autoreactive T cells. Phosphorylated by TAOK2, VRK2, MAPK11, MAPK12, MAPK14 and MINK1. As to expression, MBP isoforms are found in both the central and the peripheral nervous system, whereas Golli-MBP isoforms are expressed in fetal thymus, spleen and spinal cord, as well as in cell lines derived from the immune system.

The protein localises to the myelin membrane. Its subcellular location is the nucleus. The classic group of MBP isoforms (isoform 4-isoform 14) are with PLP the most abundant protein components of the myelin membrane in the CNS. They have a role in both its formation and stabilization. The smaller isoforms might have an important role in remyelination of denuded axons in multiple sclerosis. The non-classic group of MBP isoforms (isoform 1-isoform 3/Golli-MBPs) may preferentially have a role in the early developing brain long before myelination, maybe as components of transcriptional complexes, and may also be involved in signaling pathways in T-cells and neural cells. Differential splicing events combined with optional post-translational modifications give a wide spectrum of isomers, with each of them potentially having a specialized function. Induces T-cell proliferation. In Homo sapiens (Human), this protein is Myelin basic protein (MBP).